Consider the following 99-residue polypeptide: Nucleoid-associated protein EbfC (99 aa).

It belongs to the YbaB/EbfC family. In terms of assembly, homodimer. Can form tetramers and octamers in solution.

Its subcellular location is the cytoplasm. It localises to the nucleoid. Its function is as follows. Binds to DNA and alters its conformation. May be involved in global regulation of gene expression. Binds specifically and non-specifically to DNA, preferentially to the 4 bp broken palindrome 5'-GTnAC-3'. Affects expression of a wide variety of genes, encoding both structural and metabolic proteins. This is Nucleoid-associated protein EbfC from Borreliella burgdorferi (strain ATCC 35210 / DSM 4680 / CIP 102532 / B31) (Borrelia burgdorferi).